Consider the following 165-residue polypeptide: Chorismate pyruvate-lyase (165 aa).

M35, R77, L115, and E156 together coordinate substrate.

Belongs to the UbiC family. Monomer.

The protein resides in the cytoplasm. It carries out the reaction chorismate = 4-hydroxybenzoate + pyruvate. It functions in the pathway cofactor biosynthesis; ubiquinone biosynthesis. Functionally, removes the pyruvyl group from chorismate, with concomitant aromatization of the ring, to provide 4-hydroxybenzoate (4HB) for the ubiquinone pathway. The polypeptide is Chorismate pyruvate-lyase (Escherichia coli (strain K12 / MC4100 / BW2952)).